The sequence spans 159 residues: Stress-induced protein 1 (159 aa).

The sHSP domain occupies asparagine 33 to serine 141.

Belongs to the small heat shock protein (HSP20) family.

The sequence is that of Stress-induced protein 1 from Caenorhabditis elegans.